Consider the following 1711-residue polypeptide: Protein chiffon (1711 aa).

3 disordered regions span residues 1–31, 87–129, and 244–307; these read MQPQ…AATP, KPEV…SRAD, and TKSK…IDSS. Residues 1 to 400 form a sufficient for interaction with and activation of Cdc7 region; that stretch reads MQPQSDKQSA…PALREKSKRI (400 aa). 2 stretches are compositionally biased toward low complexity: residues 10-30 and 97-109; these read ASRL…TAAT and TPGT…TPTS. Residues Ser306 and Ser307 each carry the phosphoserine modification. A DBF4-type zinc finger spans residues 307 to 356; sequence SEKQGGVCEICKLEYDILNIHLQSKDHELFAKNSDNFLALDTLIQSSADV. Cys314, Cys317, His327, and His333 together coordinate Zn(2+). Positions 365-378 are enriched in acidic residues; sequence VESELDMDVDESLS. Disordered stretches follow at residues 365–507, 531–647, 733–771, 791–817, 908–945, 1005–1025, 1055–1157, 1271–1290, 1303–1329, 1343–1370, and 1383–1644; these read VESE…DSPS, MFPR…KPQL, LDEE…REQR, TEVK…KVKQ, QDKG…YKNK, RSTS…CRNK, QRQD…RNQS, ESEG…PPTD, MGSA…RMSN, LKSN…ALPD, and LHPI…SKYA. Residues Ser406, Ser407, Ser417, Ser432, and Ser435 each carry the phosphoserine modification. The segment covering 429–439 has biased composition (polar residues); that stretch reads QGNSPGSLSEL. Low complexity predominate over residues 445 to 454; it reads PTTAAATPTT. Ser467 carries the phosphoserine modification. Positions 493 to 505 form a DNA-binding region, a.T hook; the sequence is PRGRGRPPNQVDS. Positions 537–546 are enriched in polar residues; the sequence is VPTTRSSSEL. Residues Ser542, Ser543, and Ser544 each carry the phosphoserine modification. Positions 549–560 are enriched in basic and acidic residues; that stretch reads DVDRQTTSDVRG. Residues 563–575 show a composition bias toward low complexity; it reads SISSASLDTSTSE. The segment covering 588–601 has biased composition (basic residues); it reads IRKRAQAVGRRRKV. Residues 793 to 812 show a composition bias toward polar residues; sequence VKTSPSKSRTKIQKPSSPTK. The segment covering 908 to 932 has biased composition (basic and acidic residues); it reads QDKGEQIKLEDQKPAPKKEVKKEEE. Over residues 1006-1018 the composition is skewed to low complexity; the sequence is STSSSSCSNSQRS. The residue at position 1081 (Thr1081) is a Phosphothreonine. Ser1091 and Ser1092 each carry phosphoserine. The span at 1092-1101 shows a compositional bias: polar residues; it reads SPRTTRSQAA. A compositionally biased stretch (low complexity) spans 1398–1407; the sequence is TTTTTTTTTT. A sufficient for interaction with Gcn5 region spans residues 1400–1695; the sequence is TTTTTTTTSA…NAWRRTQRRA (296 aa). Basic and acidic residues predominate over residues 1435–1445; that stretch reads ADDKQNSREDA. Composition is skewed to acidic residues over residues 1453–1475 and 1483–1518; these read DVDE…DETM and QDVE…EEQD. 2 stretches are compositionally biased toward polar residues: residues 1536-1545 and 1556-1591; these read ISVTTPPEDS and HNGQ…SCIS.

Component of the Dbf4-dependent kinase (DDK) complex consisting of Cdc7 and the Dbf4 ortholog chif. Interacts with Cdc7; the interaction is direct. Interacts with CG5790. As to quaternary structure, component of the Chiffon histone acetyltransferase (CHAT) complex consisting of Ada3, Sgf29, Gcn5, chif/chiffon and Ada2b (Isoform A). Interacts (via C-terminus) with Gcn5; the interaction is direct but weak in the absence of other CHAT components. In terms of processing, may be proteolytically cleaved to produce a N-terminal 50 kDa product.

Its subcellular location is the nucleus. In terms of biological role, a bicistronic gene producing two proteins that are components of different complexes and have separate properties and functions. Full-length protein is proteolytically cleaved, producing a ~50kDa N-terminal product (Chiffon-A) that forms part of the DDK complex; it is unclear if the C-terminal proteolytic product is stable or functional. Alternative initiation from an internal ribosome entry site produces a C-terminal ~48kDa product (Chiffon-B or Isoform E) that forms part of the CHAT complex. Involved in regulation of gene expression during embryonic development. Regulatory component of the Dbf4-dependent kinase (DDK) complex. Required for the amplification stage, but not the preceding endoreplication stage of DNA replication in egg chamber follicle cells of the ovary. May be involved in initiation of DNA replication; activation of the chorion gene origins. May have a role in eye and thoracic bristle development. Required for female fertility; is not required for oogenesis but is required maternally for early embryo development. Functionally, component of the CHAT histone acetyltransferase complex, which predominantly acetylates histone H3. As part of the CHAT complex involved in acetylation of histone H3 on 'Lys-10' (H3K9ac), 'Lys-15' (H3K14ac) and 'Lys-19' (H3K18ac), but not 'Lys-25' (H3K24ac). May also regulate other histone acetyltransferase complexes. Essential for viability. Not required for early stages of embryonic development. May be involved in zygotic genome activation during embryogenesis. The protein is Protein chiffon of Drosophila melanogaster (Fruit fly).